The sequence spans 185 residues: Peptidyl-tRNA hydrolase (185 aa).

Tyr15 contacts tRNA. Catalysis depends on His20, which acts as the Proton acceptor. TRNA contacts are provided by Tyr64, Asn66, and Asn112.

It belongs to the PTH family. As to quaternary structure, monomer.

Its subcellular location is the cytoplasm. It carries out the reaction an N-acyl-L-alpha-aminoacyl-tRNA + H2O = an N-acyl-L-amino acid + a tRNA + H(+). Its function is as follows. Hydrolyzes ribosome-free peptidyl-tRNAs (with 1 or more amino acids incorporated), which drop off the ribosome during protein synthesis, or as a result of ribosome stalling. Functionally, catalyzes the release of premature peptidyl moieties from peptidyl-tRNA molecules trapped in stalled 50S ribosomal subunits, and thus maintains levels of free tRNAs and 50S ribosomes. The chain is Peptidyl-tRNA hydrolase from Porphyromonas gingivalis (strain ATCC BAA-308 / W83).